The chain runs to 299 residues: 33 kDa chaperonin (299 aa).

Disulfide bonds link Cys-240–Cys-242 and Cys-273–Cys-276.

Belongs to the HSP33 family. In terms of processing, under oxidizing conditions two disulfide bonds are formed involving the reactive cysteines. Under reducing conditions zinc is bound to the reactive cysteines and the protein is inactive.

Its subcellular location is the cytoplasm. Its function is as follows. Redox regulated molecular chaperone. Protects both thermally unfolding and oxidatively damaged proteins from irreversible aggregation. Plays an important role in the bacterial defense system toward oxidative stress. The chain is 33 kDa chaperonin from Gloeothece citriformis (strain PCC 7424) (Cyanothece sp. (strain PCC 7424)).